The chain runs to 146 residues: Large ribosomal subunit protein uL15 (146 aa).

The tract at residues 1 to 62 (MRLHELRPKT…GQMPLQERLP (62 aa)) is disordered. A compositionally biased stretch (basic residues) spans 10 to 21 (TNYKKSRKRKGR). The span at 42–52 (TGGGVRPGFEG) shows a compositional bias: gly residues.

It belongs to the universal ribosomal protein uL15 family. In terms of assembly, part of the 50S ribosomal subunit.

Functionally, binds to the 23S rRNA. This chain is Large ribosomal subunit protein uL15, found in Natranaerobius thermophilus (strain ATCC BAA-1301 / DSM 18059 / JW/NM-WN-LF).